The following is a 115-amino-acid chain: Secapin (115 aa).

An N-terminal signal peptide occupies residues 1-24 (MRFQVYILHLCFFILVVLTYLSQG). Positions 25–90 (QSYTTTTTTS…STENFDITNR (66 aa)) are excised as a propeptide. A disulfide bridge connects residues Cys99 and Cys110.

It belongs to the secapin family. In terms of tissue distribution, expressed in the epidermis, fat body and venom gland.

It localises to the secreted. Its function is as follows. Serine protease inhibitor which exhibits antifibrinolytic, antielastolytic and antimicrobial activities. Displays antimicrobial activity against bacteria and fungi. Likely functions in the innate immune response to microbial infection and possibly in the venom, as an antifibrinolytic agent. The recombinant form inhibits trypsin (IC(50)=80.02 nM, Ki=127.25 nM), chymotrypsin (IC(50)=393.78 nM, Ki=432.59 nM), the microbial serine proteases subtilisin A (IC(50)=379.20 nM, Ki=492.77 nM) and proteinase K (IC(50)=189.43 nM, Ki=271.76 nM), plasmin (IC(50)=457.98 nM, Ki=502.91 nM), human elastase (IC(50)=347.81 nM, Ki=469.90 nM) and porcine elastase (IC(50)=94.70 nM, Ki=125.62 nM). Does not inhibit thrombin. Binds to human plasmin and inhibits the plasmin-mediated degradation of fibrin to fibrin degradation products, indicating its role as an anti-fibrinolytic agent. Also binds to bacterial and fungal surfaces. Exhibits antimicrobial activity against the Gram-positive bacteria B.thuringiensis (MIC=4.21 uM) and P.larvae (MIC=11.13 uM), the Gram-negative bacteria E.coli (MIC=6.50 uM) and the multidrug-resistant A.baumannii (MIC=5 ug/ml, MBC=10 ug/ml), as well as against the fungus B.bassiana (IC(50)=2.57 uM). The synthetic peptide also exhibits antimicrobial activity against the Gram-positive bacterium P.larvae (MIC=41.12 uM), the Gram-negative bacterium P.aeruginosa (MIC=65.75 uM), and the fungus B.bassiana (IC(50)=44.27 uM). Is also able to prevent A.baumannii biofilm formation and eliminate established A.baumannii biofilms. In vitro, does not induce an inflammatory response and has no cytotoxic activity against mammalian cells. This is Secapin from Apis cerana (Indian honeybee).